We begin with the raw amino-acid sequence, 908 residues long: 26S proteasome non-ATPase regulatory subunit 2 (908 aa).

N-acetylmethionine is present on Met-1. Residues 1-52 form a disordered region; that stretch reads MEEGGRDKAPVQPQQSPAAALGGTDEKPSGKERRDAGDKDKEQELSEEDKQL. A compositionally biased stretch (low complexity) spans 10–20; sequence PVQPQQSPAAA. Residue Ser-16 is modified to Phosphoserine. Thr-24 bears the Phosphothreonine mark. Positions 24–52 are enriched in basic and acidic residues; that stretch reads TDEKPSGKERRDAGDKDKEQELSEEDKQL. 2 positions are modified to phosphoserine: Ser-29 and Ser-147. A Phosphotyrosine modification is found at Tyr-194. Phosphoserine occurs at positions 361 and 363. PC repeat units follow at residues 409–442, 443–479, 480–514, 517–551, and 560–589; these read SAAASLGMILLWDVDGGLTQIDKYLYSSEDYIKS, GALLACGIVNSGVRNECDPALALLSDYVLHNSNTMRL, GSIFGLGLAYAGSNREDVLTLLLPVMGDSKSSMEV, VTALACGMIAVGSCNGDVTSTILQTIMEKSETELK, and LGLGLNHLGKGEAIEAILAALEVVSEPFRS. An N6-acetyllysine modification is found at Lys-551. The segment covering 623 to 643 has biased composition (basic and acidic residues); the sequence is KEKEEDKDKKEKKDKDKKEAP. A disordered region spans residues 623 to 645; sequence KEKEEDKDKKEKKDKDKKEAPAD. PC repeat units lie at residues 692–723 and 742–757; these read LALALISVSNPRLNILDTLSKFSHDADPEVSY and AAMLRQLAQYHAKDPN. Residues 708 to 903 form a required for interaction with UBLCP1 region; sequence DTLSKFSHDA…LEGFVILRKN (196 aa).

This sequence belongs to the proteasome subunit S2 family. As to quaternary structure, component of the 19S proteasome regulatory particle complex. The 26S proteasome consists of a 20S core particle (CP) and two 19S regulatory subunits (RP). The regulatory particle is made of a lid composed of 9 subunits, a base containing 6 ATPases and few additional components including PSMD2. Interacts with RPGRIP1L. Interacts with CRY1 in a KDM8-dependent manner. Interacts (via C-terminus) with phosphatase UBLCP1 (via ubiquitin-like domain); the interaction recruits UBLCP1 to the 19S regulatory particle where it dephosphorylates 19S subunit PSMC2/RPT1 which impairs PSMC2 ATPase activity and disrupts 26S proteasome assembly.

In terms of biological role, component of the 26S proteasome, a multiprotein complex involved in the ATP-dependent degradation of ubiquitinated proteins. This complex plays a key role in the maintenance of protein homeostasis by removing misfolded or damaged proteins, which could impair cellular functions, and by removing proteins whose functions are no longer required. Therefore, the proteasome participates in numerous cellular processes, including cell cycle progression, apoptosis, or DNA damage repair. Its function is as follows. Binds to the intracellular domain of tumor necrosis factor type 1 receptor. The binding domain of TRAP1 and TRAP2 resides outside the death domain of TNFR1. This chain is 26S proteasome non-ATPase regulatory subunit 2 (PSMD2), found in Pongo abelii (Sumatran orangutan).